Consider the following 180-residue polypeptide: KxDL motif-containing protein 1 (180 aa).

2 stretches are compositionally biased toward polar residues: residues 130–144 (TSEQ…SPSI) and 158–170 (QAPS…NGQI). Residues 130 to 180 (TSEQSTESCDTSPSIISPAMSQDFEDLSQAPSDTPSVNGQILTDEELVHED) form a disordered region.

It belongs to the KXD1 family. As to quaternary structure, associates with the BLOC-1 complex.

It localises to the lysosome membrane. In terms of biological role, as part of a BORC-like complex may play a role in lysosomes movement and localization at the cell periphery. Associated with the cytosolic face of lysosomes, this complex may couple lysosomes to microtubule plus-end-directed kinesin motor. May also be involved in the biogenesis of lysosome-related organelles such as melanosomes. This chain is KxDL motif-containing protein 1 (kxd1), found in Xenopus laevis (African clawed frog).